Reading from the N-terminus, the 37-residue chain is 24 kDa antigen (37 aa).

The sequence is that of 24 kDa antigen from Plasmodium chabaudi.